A 411-amino-acid chain; its full sequence is Adenylosuccinate synthetase (411 aa).

Residues 11–17 and 39–41 each bind GTP; these read GDEGKGK and GHT. Residue Asp-12 is the Proton acceptor of the active site. The Mg(2+) site is built by Asp-12 and Gly-39. IMP-binding positions include 12 to 15, 37 to 40, Thr-121, Arg-135, Gln-215, Thr-230, and Arg-294; these read DEGK and NAGH. Residue His-40 is the Proton donor of the active site. Position 290–296 (290–296) interacts with substrate; the sequence is TTTKRPR. Residues Arg-296, 322-324, and 400-402 contribute to the GTP site; these read KLD and STS.

Belongs to the adenylosuccinate synthetase family. In terms of assembly, homodimer. The cofactor is Mg(2+).

It is found in the cytoplasm. The enzyme catalyses IMP + L-aspartate + GTP = N(6)-(1,2-dicarboxyethyl)-AMP + GDP + phosphate + 2 H(+). It participates in purine metabolism; AMP biosynthesis via de novo pathway; AMP from IMP: step 1/2. Plays an important role in the de novo pathway of purine nucleotide biosynthesis. Catalyzes the first committed step in the biosynthesis of AMP from IMP. The protein is Adenylosuccinate synthetase of Helicobacter pylori (strain G27).